The following is a 192-amino-acid chain: PBAN-type neuropeptides (192 aa).

The N-terminal stretch at 1–23 is a signal peptide; that stretch reads MYKTNIVFNVLALALFSIFFASC. At Leu47 the chain carries Leucine amide. The propeptide occupies 51–94; it reads SMKPSTEDNRQTFLRLLEAADALKFYYDQLPYERQADEPETKVT. Leu103, Leu122, Leu158, and Leu168 each carry leucine amide. The propeptide occupies 171–192; the sequence is ELSYDYPTKYRVARSVNKTMDN.

It belongs to the pyrokinin family. As to expression, expression is restricted to the subesophageal ganglion.

It localises to the secreted. Functionally, a hormone that controls sex pheromone production in females and pheromone responsiveness in male. Also mediates visceral muscle contractile activity (myotropic activity). Identical to MRCH which is implicated in the formation of both melanin in the cuticle and ommochrome in the epidermis of armyworm species. In terms of biological role, diapause hormone (DH) is responsible for induction of embryonic diapause. Its function is as follows. The three SGNPS are far less active than DH in inducing diapause eggs. Beta-SGNP expressed higher pban activity than PBAN-I, but alpha- and gamma-SGNP were far less active in pheromonotropic activity. This is PBAN-type neuropeptides from Bombyx mori (Silk moth).